Consider the following 208-residue polypeptide: 3-demethoxyubiquinol 3-hydroxylase (208 aa).

Residues Glu-57, Glu-87, His-90, Glu-139, Glu-171, and His-174 each contribute to the Fe cation site.

It belongs to the COQ7 family. Fe cation serves as cofactor.

Its subcellular location is the cell membrane. The catalysed reaction is a 5-methoxy-2-methyl-3-(all-trans-polyprenyl)benzene-1,4-diol + AH2 + O2 = a 3-demethylubiquinol + A + H2O. It functions in the pathway cofactor biosynthesis; ubiquinone biosynthesis. Its function is as follows. Catalyzes the hydroxylation of 2-nonaprenyl-3-methyl-6-methoxy-1,4-benzoquinol during ubiquinone biosynthesis. In Burkholderia cenocepacia (strain ATCC BAA-245 / DSM 16553 / LMG 16656 / NCTC 13227 / J2315 / CF5610) (Burkholderia cepacia (strain J2315)), this protein is 3-demethoxyubiquinol 3-hydroxylase.